The following is a 401-amino-acid chain: Argininosuccinate synthase (401 aa).

9–17 (AYSGGLDTS) provides a ligand contact to ATP. Tyr-86 contacts L-citrulline. Gly-116 provides a ligand contact to ATP. Residues Thr-118, Asn-122, and Asp-123 each coordinate L-aspartate. L-citrulline is bound at residue Asn-122. Residues Arg-126, Ser-174, Ser-183, Glu-259, and Tyr-271 each coordinate L-citrulline.

Belongs to the argininosuccinate synthase family. Type 1 subfamily. As to quaternary structure, homotetramer.

It localises to the cytoplasm. The enzyme catalyses L-citrulline + L-aspartate + ATP = 2-(N(omega)-L-arginino)succinate + AMP + diphosphate + H(+). It functions in the pathway amino-acid biosynthesis; L-arginine biosynthesis; L-arginine from L-ornithine and carbamoyl phosphate: step 2/3. The protein is Argininosuccinate synthase of Bacillus anthracis (strain A0248).